A 460-amino-acid chain; its full sequence is ATP synthase subunit beta (460 aa).

An ATP-binding site is contributed by 150-157; sequence GGAGVGKT.

It belongs to the ATPase alpha/beta chains family. F-type ATPases have 2 components, CF(1) - the catalytic core - and CF(0) - the membrane proton channel. CF(1) has five subunits: alpha(3), beta(3), gamma(1), delta(1), epsilon(1). CF(0) has three main subunits: a(1), b(2) and c(9-12). The alpha and beta chains form an alternating ring which encloses part of the gamma chain. CF(1) is attached to CF(0) by a central stalk formed by the gamma and epsilon chains, while a peripheral stalk is formed by the delta and b chains.

It localises to the cell inner membrane. The catalysed reaction is ATP + H2O + 4 H(+)(in) = ADP + phosphate + 5 H(+)(out). Its function is as follows. Produces ATP from ADP in the presence of a proton gradient across the membrane. The catalytic sites are hosted primarily by the beta subunits. The chain is ATP synthase subunit beta from Pectobacterium carotovorum subsp. carotovorum (strain PC1).